Reading from the N-terminus, the 560-residue chain is Probable 2,3-bisphosphoglycerate-independent phosphoglycerate mutase 2 (560 aa).

An N-acetylglycine modification is found at glycine 2. Residues aspartate 29 and serine 82 each contribute to the Mn(2+) site. The Phosphoserine intermediate role is filled by serine 82. Substrate is bound by residues histidine 141, 171-172 (RD), arginine 207, arginine 214, 287-290 (RADR), and lysine 362. The Mn(2+) site is built by aspartate 431, histidine 435, aspartate 472, histidine 473, and histidine 502.

It belongs to the BPG-independent phosphoglycerate mutase family. As to quaternary structure, monomer. It depends on Mn(2+) as a cofactor.

It is found in the cytoplasm. It catalyses the reaction (2R)-2-phosphoglycerate = (2R)-3-phosphoglycerate. The protein operates within carbohydrate degradation; glycolysis; pyruvate from D-glyceraldehyde 3-phosphate: step 3/5. Functionally, catalyzes the interconversion of 2-phosphoglycerate (2-PGA) and 3-phosphoglycerate (3-PGA). Required for guard cell function (e.g. blue light-, abscisic acid- (ABA), and low CO(2)-regulated stomatal movements) and fertility (e.g. pollen grains production). The chain is Probable 2,3-bisphosphoglycerate-independent phosphoglycerate mutase 2 (PGM2) from Arabidopsis thaliana (Mouse-ear cress).